We begin with the raw amino-acid sequence, 151 residues long: Ribosome maturation factor RimP (151 aa).

This sequence belongs to the RimP family.

The protein resides in the cytoplasm. Functionally, required for maturation of 30S ribosomal subunits. The polypeptide is Ribosome maturation factor RimP (Desulfotalea psychrophila (strain LSv54 / DSM 12343)).